A 263-amino-acid polypeptide reads, in one-letter code: Lens fiber major intrinsic protein (263 aa).

Over Met1–Phe9 the chain is Cytoplasmic. Residues Trp10–Gly29 form a helical membrane-spanning segment. The Extracellular segment spans residues Ala30 to Val41. The helical transmembrane segment at Leu42 to Val59 threads the bilayer. Residues Gly60 to His61 lie on the Cytoplasmic side of the membrane. The segment at residues Ile62 to Val77 is an intramembrane region (discontinuously helical). An NPA 1 motif is present at residues Asn68–Ala70. At Gly78–Ser82 the chain is on the cytoplasmic side. The helical transmembrane segment at Leu83–Ser106 threads the bilayer. The Extracellular portion of the chain corresponds to Val107–Val127. Residues Gly128 to Thr148 traverse the membrane as a helical segment. At Tyr149–Arg156 the chain is on the cytoplasmic side. A helical transmembrane segment spans residues Leu157–Gly175. Residues Met176 to Tyr178 lie on the Extracellular side of the membrane. Positions Thr179–Ile193 form an intramembrane region, discontinuously helical. The NPA 2 motif lies at Asn184–Ala186. Residues Leu194–Asn200 are Extracellular-facing. A helical membrane pass occupies residues His201–Leu222. Residues Leu223–Leu263 lie on the Cytoplasmic side of the membrane. The interaction with CALM stretch occupies residues Leu227 to Leu237. Phosphoserine is present on residues Ser235, Ser243, and Ser245. The interval Ala240–Leu263 is disordered. Asn246 carries the post-translational modification Deamidated asparagine.

Belongs to the MIP/aquaporin (TC 1.A.8) family. In terms of assembly, homotetramer; each monomer provides an independent water pore. Two homotetramers on opposing membranes can dimerize, forming a cell-cell junction. Interacts with CALM; the calcium-calmodulin/CALM complex interacts with the cytoplasmic domains of two aquaporins, leading to channel closure. Interacts with BFSP1 (via C-terminus); prevents calcium-dependent inhibition of the water channel activity. In terms of processing, subject to partial proteolytic cleavage in the eye lens core. Partial proteolysis promotes interactions between tetramers from adjoining membranes. Fatty acylated at Met-1 and Lys-238. The acyl modifications, in decreasing order of ion abundance, are: oleoyl (C18:1) &gt; palmitoyl (C16:0) &gt; stearoyl (C18:0) &gt; eicosenoyl (C20:1) &gt; dihomo-gamma-linolenoyl (C20:3) &gt; palmitoleoyl (C16:1) &gt; eicosadienoyl (C20:2).

It is found in the cell membrane. The protein resides in the cell junction. It catalyses the reaction H2O(in) = H2O(out). The water channel activity is inhibited by calcium through calmodulin/CALM. Functionally, aquaporins form homotetrameric transmembrane channels, with each monomer independently mediating water transport across the plasma membrane along its osmotic gradient. Specifically expressed in lens fiber cells, this aquaporin is crucial for maintaining lens water homeostasis and transparency. Beyond water permeability, it also acts as a cell-to-cell adhesion molecule, forming thin junctions between lens fiber cells that are essential for maintaining the ordered structure and transparency of the lens. This is Lens fiber major intrinsic protein from Canis lupus familiaris (Dog).